We begin with the raw amino-acid sequence, 453 residues long: O-methyltransferase bik3 (453 aa).

The disordered stretch occupies residues methionine 1–asparagine 25. Residues asparagine 8 to asparagine 25 show a composition bias toward low complexity. Position 305 (aspartate 305) interacts with S-adenosyl-L-methionine. The Proton acceptor role is filled by histidine 355.

It belongs to the class I-like SAM-binding methyltransferase superfamily. Cation-independent O-methyltransferase family. COMT subfamily.

It participates in secondary metabolite biosynthesis. Its function is as follows. O-methyltransferase; part of the gene cluster that mediates the biosynthesis of bikaverin, a red pigment also considered as a mycotoxin. The first stage is catalyzed by the polyketide synthase bik1, which catalyzes the formation of the intermediate SMA76a also knowm as pre-bikaverin. FAD-dependent monooxygenase bik2 might then be responsible for the oxidation of pre-bikaverin to oxo-pre-bikaverin which is in turn methylated by the O-methyltransferase bik3 to me-oxo-pre-bikaverin. A further cycle of oxydation and methylation by bik2 and bik3 leads to the final product of bikaverin, via a nor-bikaverin intermediate. This Gibberella fujikuroi (strain CBS 195.34 / IMI 58289 / NRRL A-6831) (Bakanae and foot rot disease fungus) protein is O-methyltransferase bik3.